Reading from the N-terminus, the 490-residue chain is Transmembrane protein 185-like (490 aa).

The segment covering 1–31 (MIENENTSLLSTSSSSTSSSPNNANSPSSLN) has biased composition (low complexity). Disordered regions lie at residues 1–151 (MIEN…SKYK) and 455–490 (NMIN…ISNL). The segment covering 47–59 (TSGNNSPSAQITK) has biased composition (polar residues). 2 stretches are compositionally biased toward low complexity: residues 66-80 (SNNS…NSRS) and 89-108 (NNNN…NNIN). Over residues 109-125 (KHNSIVYNKSNNKLNSI) the composition is skewed to polar residues. A compositionally biased stretch (gly residues) spans 133–145 (QGGGGGNGNGNGN). A compositionally biased stretch (acidic residues) spans 463–472 (SESESDDETE).

Belongs to the TMEM185 family.

The chain is Transmembrane protein 185-like from Dictyostelium discoideum (Social amoeba).